Here is a 581-residue protein sequence, read N- to C-terminus: 2-succinyl-5-enolpyruvyl-6-hydroxy-3-cyclohexene-1-carboxylate synthase (581 aa).

Belongs to the TPP enzyme family. MenD subfamily. As to quaternary structure, homodimer. Requires Mg(2+) as cofactor. Mn(2+) serves as cofactor. Thiamine diphosphate is required as a cofactor.

It carries out the reaction isochorismate + 2-oxoglutarate + H(+) = 5-enolpyruvoyl-6-hydroxy-2-succinyl-cyclohex-3-ene-1-carboxylate + CO2. Its pathway is quinol/quinone metabolism; 1,4-dihydroxy-2-naphthoate biosynthesis; 1,4-dihydroxy-2-naphthoate from chorismate: step 2/7. It participates in cofactor biosynthesis; phylloquinone biosynthesis. In terms of biological role, catalyzes the thiamine diphosphate-dependent decarboxylation of 2-oxoglutarate and the subsequent addition of the resulting succinic semialdehyde-thiamine pyrophosphate anion to isochorismate to yield 2-succinyl-5-enolpyruvyl-6-hydroxy-3-cyclohexene-1-carboxylate (SEPHCHC). This is 2-succinyl-5-enolpyruvyl-6-hydroxy-3-cyclohexene-1-carboxylate synthase from Gloeothece citriformis (strain PCC 7424) (Cyanothece sp. (strain PCC 7424)).